The following is a 727-amino-acid chain: Cyclin-T1 (727 aa).

A Phosphoserine modification is found at S117. Residues 253-270 carry the Nuclear localization signal, and interaction with Tat-TAR RNA motif; sequence KRIRNWRACQAAKKTKAD. Over residues 302 to 322 the composition is skewed to low complexity; that stretch reads MSTSSTTSTVPSLPTTEESSS. Residues 302-326 form a disordered region; that stretch reads MSTSSTTSTVPSLPTTEESSSNLSG. Residue K343 forms a Glycyl lysine isopeptide (Lys-Gly) (interchain with G-Cter in SUMO2) linkage. The stretch at 386 to 427 forms a coiled coil; that stretch reads SAKVSLKEYRAKHAEELAAQKRQLENMEANVKSQYAYAAQNL. A Phosphoserine modification is found at S390. Position 392 is an N6-acetyllysine (K392). K417 participates in a covalent cross-link: Glycyl lysine isopeptide (Lys-Gly) (interchain with G-Cter in SUMO2). An ADP-ribosylserine mark is found at S418, S476, and S477. The interval 482–552 is histidine-rich domain (HRD); it reads IKMRIKVHAA…RPGDPKHSSQ (71 aa). A Glycyl lysine isopeptide (Lys-Gly) (interchain with G-Cter in SUMO2) cross-link involves residue K483. Positions 486–508 are enriched in basic and acidic residues; the sequence is IKVHAAPDKHNSIDDSVTKSREH. 2 disordered regions span residues 486–591 and 692–727; these read IKVH…DHPA and LNPR…PLPK. N6-(ADP-ribosyl)lysine is present on K487. Residue H489 is modified to ADP-ribosylhistidine. 2 positions are modified to phosphoserine: S497 and S501. Basic residues predominate over residues 509–532; that stretch reads KEKHKTHPSNHHHHHNHHSHKHSH. H532 bears the ADP-ribosylhistidine mark. ADP-ribosylserine occurs at positions 533, 551, and 554. ADP-ribosylhistidine is present on H558. Low complexity predominate over residues 562-572; it reads SLSSSFSSSSS. S565 carries the post-translational modification ADP-ribosylserine. Position 566 is a phosphoserine (S566). The span at 711–727 shows a compositional bias: pro residues; that stretch reads LPPLPSEPPPPLPPLPK.

It belongs to the cyclin family. Cyclin C subfamily. As to quaternary structure, cyclin-T1 is the predominant cyclin that associates with CDK9 to form a heterodimer called P-TEFb. P-TEFb forms a complex with AFF4/AF5Q31. Component of a complex which is at least composed of HTATSF1/Tat-SF1, P-TEFb complex, RNA pol II, SUPT5H, and NCL/nucleolin. Component of the 7SK snRNP complex at least composed of P-TEFb (composed of CDK9 and CCNT1/cyclin-T1), HEXIM1, HEXIM2, BCDIN3, SART3 proteins and 7SK and U6 snRNAs. Interacts (via central region) with ZMYND8 (via N-terminus); the interaction is direct and the association appears to occur between homodimeric ZMYND8 and the activated form of the P-TEFb complex. Interacts with BRD4, targets chromatin binding. Interacts with JMJD6. Interacts with MDFIC. Interacts with HSF1. Interacts with HTATSF1. Interacts with TBX21. Post-translationally, ADP-ribosylation on serine residues by PARP1 in response to DNA damage disrupts the phase separation activity of CCNT1, thereby preventing activation of CDK9.

It is found in the nucleus. Its function is as follows. Regulatory subunit of the cyclin-dependent kinase pair (CDK9/cyclin-T1) complex, also called positive transcription elongation factor B (P-TEFb), which facilitates the transition from abortive to productive elongation by phosphorylating the CTD (C-terminal domain) of the large subunit of RNA polymerase II (RNA Pol II). Required to activate the protein kinase activity of CDK9: acts by mediating formation of liquid-liquid phase separation (LLPS) that enhances binding of P-TEFb to the CTD of RNA Pol II. This is Cyclin-T1 (CCNT1) from Equus caballus (Horse).